A 452-amino-acid polypeptide reads, in one-letter code: Pup--protein ligase (452 aa).

A Mg(2+)-binding site is contributed by Glu9. Arg53 is a binding site for ATP. Tyr55 is a binding site for Mg(2+). The active-site Proton acceptor is the Asp57. Glu63 is a binding site for Mg(2+). Positions 66 and 419 each coordinate ATP.

Belongs to the Pup ligase/Pup deamidase family. Pup-conjugating enzyme subfamily.

The enzyme catalyses ATP + [prokaryotic ubiquitin-like protein]-L-glutamate + [protein]-L-lysine = ADP + phosphate + N(6)-([prokaryotic ubiquitin-like protein]-gamma-L-glutamyl)-[protein]-L-lysine.. Its pathway is protein degradation; proteasomal Pup-dependent pathway. It functions in the pathway protein modification; protein pupylation. Catalyzes the covalent attachment of the prokaryotic ubiquitin-like protein modifier Pup to the proteasomal substrate proteins, thereby targeting them for proteasomal degradation. This tagging system is termed pupylation. The ligation reaction involves the side-chain carboxylate of the C-terminal glutamate of Pup and the side-chain amino group of a substrate lysine. This is Pup--protein ligase from Rhodococcus jostii (strain RHA1).